The primary structure comprises 186 residues: MADIAALTKLIEPEAKALGLDLVRVAFFGGKSDPTLQVMAERPDTRQLDIADCEALSRRISDKFDELDPIEDAYRLEVSSPGIDRPLTRVKDWADWSGFDARVKLAAPLDGRKQFDGRIVASDGDSVTLGVNKLGEVTVPLAQIASAKLILTDALIKATAPLSTEGVDQIVEDAPHRGAGKIQLEG.

This sequence belongs to the RimP family.

Its subcellular location is the cytoplasm. Its function is as follows. Required for maturation of 30S ribosomal subunits. The polypeptide is Ribosome maturation factor RimP (Rhizorhabdus wittichii (strain DSM 6014 / CCUG 31198 / JCM 15750 / NBRC 105917 / EY 4224 / RW1) (Sphingomonas wittichii)).